We begin with the raw amino-acid sequence, 479 residues long: Probable polyamine transporter At3g19553 (479 aa).

The next 12 membrane-spanning stretches (helical) occupy residues 22-42, 53-73, 86-106, 130-150, 160-180, 236-256, 275-295, 304-324, 332-352, 355-375, 395-415, and 420-440; these read LTLL…PFGV, LLAL…EALV, GYVV…EGFW, FPVL…TFSL, IVGF…VVMA, ALFG…MAGT, VGML…AAMS, MSSD…PAFF, TPTI…WMSF, IIEF…AAFV, FGVS…MVLA, and FLIS…LTLV. A disordered region spans residues 454–479; the sequence is RPVSGVSSESQLDEEHGDESAASLLP.

It belongs to the amino acid-polyamine-organocation (APC) superfamily. Polyamine:cation symporter (PHS) (TC 2.A.3.12) family.

The protein localises to the cell membrane. Functionally, probable cell membrane polyamine/proton symporter involved in the polyamine uptake in cells. This chain is Probable polyamine transporter At3g19553, found in Arabidopsis thaliana (Mouse-ear cress).